A 455-amino-acid chain; its full sequence is tRNA-2-methylthio-N(6)-dimethylallyladenosine synthase (455 aa).

One can recognise an MTTase N-terminal domain in the interval 10–130; the sequence is RKVFIKTYGC…LPDALKRVRR (121 aa). Residues Cys19, Cys55, Cys93, Cys171, Cys175, and Cys178 each contribute to the [4Fe-4S] cluster site. Positions 157-389 constitute a Radical SAM core domain; the sequence is RSRGVTAFLT…QALLLRQQKE (233 aa). In terms of domain architecture, TRAM spans 392–454; sequence ESLVGKTMDV…PNSLFAEVAG (63 aa).

It belongs to the methylthiotransferase family. MiaB subfamily. Monomer. The cofactor is [4Fe-4S] cluster.

Its subcellular location is the cytoplasm. The catalysed reaction is N(6)-dimethylallyladenosine(37) in tRNA + (sulfur carrier)-SH + AH2 + 2 S-adenosyl-L-methionine = 2-methylsulfanyl-N(6)-dimethylallyladenosine(37) in tRNA + (sulfur carrier)-H + 5'-deoxyadenosine + L-methionine + A + S-adenosyl-L-homocysteine + 2 H(+). Functionally, catalyzes the methylthiolation of N6-(dimethylallyl)adenosine (i(6)A), leading to the formation of 2-methylthio-N6-(dimethylallyl)adenosine (ms(2)i(6)A) at position 37 in tRNAs that read codons beginning with uridine. The protein is tRNA-2-methylthio-N(6)-dimethylallyladenosine synthase of Agrobacterium fabrum (strain C58 / ATCC 33970) (Agrobacterium tumefaciens (strain C58)).